The following is a 364-amino-acid chain: Probable dual-specificity RNA methyltransferase RlmN (364 aa).

The Proton acceptor role is filled by glutamate 107. Residues 113–346 form the Radical SAM core domain; it reads HEYGNSVCVT…ATIRREQGSD (234 aa). A disulfide bridge links cysteine 120 with cysteine 351. The [4Fe-4S] cluster site is built by cysteine 127, cysteine 131, and cysteine 134. Residues 177–178, serine 209, 232–234, and asparagine 308 each bind S-adenosyl-L-methionine; these read GE and SLH. The active-site S-methylcysteine intermediate is the cysteine 351.

Belongs to the radical SAM superfamily. RlmN family. It depends on [4Fe-4S] cluster as a cofactor.

The protein resides in the cytoplasm. The catalysed reaction is adenosine(2503) in 23S rRNA + 2 reduced [2Fe-2S]-[ferredoxin] + 2 S-adenosyl-L-methionine = 2-methyladenosine(2503) in 23S rRNA + 5'-deoxyadenosine + L-methionine + 2 oxidized [2Fe-2S]-[ferredoxin] + S-adenosyl-L-homocysteine. It carries out the reaction adenosine(37) in tRNA + 2 reduced [2Fe-2S]-[ferredoxin] + 2 S-adenosyl-L-methionine = 2-methyladenosine(37) in tRNA + 5'-deoxyadenosine + L-methionine + 2 oxidized [2Fe-2S]-[ferredoxin] + S-adenosyl-L-homocysteine. Functionally, specifically methylates position 2 of adenine 2503 in 23S rRNA and position 2 of adenine 37 in tRNAs. Confers resistance to some classes of antibiotics. This is Probable dual-specificity RNA methyltransferase RlmN from Staphylococcus epidermidis (strain ATCC 12228 / FDA PCI 1200).